The following is a 334-amino-acid chain: Adenine deaminase (334 aa).

3 residues coordinate Zn(2+): His-14, His-16, and His-194. Residue Glu-197 is the Proton donor of the active site. Asp-275 contributes to the Zn(2+) binding site. Asp-276 serves as a coordination point for substrate.

This sequence belongs to the metallo-dependent hydrolases superfamily. Adenosine and AMP deaminases family. Adenine deaminase type 2 subfamily. Requires Zn(2+) as cofactor.

The catalysed reaction is adenine + H2O + H(+) = hypoxanthine + NH4(+). Its function is as follows. Catalyzes the hydrolytic deamination of adenine to hypoxanthine. Plays an important role in the purine salvage pathway and in nitrogen catabolism. The chain is Adenine deaminase from Hahella chejuensis (strain KCTC 2396).